Here is a 139-residue protein sequence, read N- to C-terminus: Nucleoside diphosphate kinase (139 aa).

ATP is bound by residues K9, F57, R85, T91, R102, and N112. The active-site Pros-phosphohistidine intermediate is H115.

This sequence belongs to the NDK family. Homotetramer. It depends on Mg(2+) as a cofactor.

The protein resides in the cytoplasm. The enzyme catalyses a 2'-deoxyribonucleoside 5'-diphosphate + ATP = a 2'-deoxyribonucleoside 5'-triphosphate + ADP. The catalysed reaction is a ribonucleoside 5'-diphosphate + ATP = a ribonucleoside 5'-triphosphate + ADP. In terms of biological role, major role in the synthesis of nucleoside triphosphates other than ATP. The ATP gamma phosphate is transferred to the NDP beta phosphate via a ping-pong mechanism, using a phosphorylated active-site intermediate. This is Nucleoside diphosphate kinase from Exiguobacterium sp. (strain ATCC BAA-1283 / AT1b).